An 85-amino-acid chain; its full sequence is Antitoxin VapB43 (85 aa).

The tract at residues 37–60 (GLNPPKPQAAGRYRVQPSGKGGLR) is disordered.

Antitoxin component of a type II toxin-antitoxin (TA) system. This chain is Antitoxin VapB43 (vapB43), found in Mycobacterium tuberculosis (strain CDC 1551 / Oshkosh).